An 85-amino-acid chain; its full sequence is Large ribosomal subunit protein bL27 (85 aa).

This sequence belongs to the bacterial ribosomal protein bL27 family.

The polypeptide is Large ribosomal subunit protein bL27 (Solibacter usitatus (strain Ellin6076)).